The primary structure comprises 515 residues: Maturase K (515 aa).

The protein belongs to the intron maturase 2 family. MatK subfamily.

It is found in the plastid. The protein resides in the chloroplast. Functionally, usually encoded in the trnK tRNA gene intron. Probably assists in splicing its own and other chloroplast group II introns. In Pinus pumila (Dwarf Siberian pine), this protein is Maturase K.